We begin with the raw amino-acid sequence, 115 residues long: uncharacterized protein (115 aa).

Belongs to the transposase 34 family.

This is an uncharacterized protein from Sinorhizobium fredii (strain NBRC 101917 / NGR234).